Consider the following 131-residue polypeptide: Interleukin-13 (131 aa).

An N-terminal signal peptide occupies residues Met-1–Ala-18. N-linked (GlcNAc...) asparagine glycosylation is found at Asn-42, Asn-53, Asn-76, and Asn-121. Cystine bridges form between Cys-52–Cys-80 and Cys-68–Cys-94.

This sequence belongs to the IL-4/IL-13 family. As to quaternary structure, interacts with IL13RA2.

The protein resides in the secreted. Functionally, cytokine that plays important roles in allergic inflammation and immune response to parasite infection. Synergizes with IL2 in regulating interferon-gamma synthesis. Stimulates B-cell proliferation, and activation of eosinophils, basophils, and mast cells. Plays an important role in controlling IL33 activity by modulating the production of transmembrane and soluble forms of interleukin-1 receptor-like 1/IL1RL1. Displays the capacity to antagonize Th1-driven proinflammatory immune response and downregulates synthesis of many proinflammatory cytokines including IL1, IL6, IL10, IL12 and TNF-alpha through a mechanism that partially involves suppression of NF-kappa-B. Also functions on nonhematopoietic cells, including endothelial cells where it induces vascular cell adhesion protein 1/VCAM1, which is important in the recruitment of eosinophils. Exerts its biological effects through its receptors which comprises the IL4R chain and the IL13RA1 chain, to activate JAK1 and TYK2, leading to the activation of STAT6. Aside from IL13RA1, another receptor IL13RA2 acts as a high affinity decoy for IL13 and mediates internalization and depletion of extracellular IL13. The protein is Interleukin-13 (Il13) of Rattus norvegicus (Rat).